The following is an 86-amino-acid chain: Large ribosomal subunit protein uL23 (86 aa).

This sequence belongs to the universal ribosomal protein uL23 family. In terms of assembly, part of the 50S ribosomal subunit. Contacts protein L29.

Its function is as follows. Binds to 23S rRNA. One of the proteins that surrounds the polypeptide exit tunnel on the outside of the ribosome. The protein is Large ribosomal subunit protein uL23 of Methanocaldococcus jannaschii (strain ATCC 43067 / DSM 2661 / JAL-1 / JCM 10045 / NBRC 100440) (Methanococcus jannaschii).